The sequence spans 1363 residues: ABC multidrug transporter MDR2 (1363 aa).

The helical transmembrane segment at 65–85 (IALIVIGTIAGIGAGIPFPLL) threads the bilayer. An ABC transmembrane type-1 1 domain is found at 69–367 (VIGTIAGIGA…MAPFMHIFAS (299 aa)). Residue Asn-97 is glycosylated (N-linked (GlcNAc...) asparagine). Helical transmembrane passes span 119 to 139 (VLQV…HTGC), 193 to 213 (KVGL…VAFL), 215 to 235 (VATI…MAFG), 301 to 321 (IQFG…FWQG), and 336 to 356 (VSVG…FVLS). Residues 403-682 (IELQDVTFNY…DGVYAGMVRL (280 aa)) enclose the ABC transporter 1 domain. Residue 438–445 (GTSGSGKS) participates in ATP binding. Residues Asn-552 and Asn-633 are each glycosylated (N-linked (GlcNAc...) asparagine). Positions 738-758 (YMPEEADSLPTEPENEKEKPK) are disordered. Transmembrane regions (helical) follow at residues 781–801 (LGLI…VIFG), 820–840 (GMLF…AVIV), and 896–916 (LTGT…AGVI). The region spanning 781-1052 (LGLITSIMIG…MFALVPDISK (272 aa)) is the ABC transmembrane type-1 2 domain. N-linked (GlcNAc...) asparagine glycosylation is present at Asn-973. The next 2 membrane-spanning stretches (helical) occupy residues 992-1012 (FWLS…YWWG) and 1016-1036 (ILAG…LLFS). Residues 1119-1358 (VQFRNVHFRY…CESYRANVIH (240 aa)) form the ABC transporter 2 domain. 1154–1161 (GPSGSGKS) is an ATP binding site.

The protein belongs to the ABC transporter superfamily. ABCB family. Multidrug resistance exporter (TC 3.A.1.201) subfamily.

Its subcellular location is the cell membrane. Its function is as follows. Pleiotropic ABC efflux transporter that may be involved in the modulation susceptibility to a wide range of unrelated cytotoxic compounds. This Trichophyton tonsurans (strain CBS 112818) (Scalp ringworm fungus) protein is ABC multidrug transporter MDR2.